Reading from the N-terminus, the 141-residue chain is Small ribosomal subunit protein uS8c (141 aa).

This sequence belongs to the universal ribosomal protein uS8 family. As to quaternary structure, part of the 30S ribosomal subunit.

It is found in the plastid. The protein localises to the chloroplast. Its function is as follows. One of the primary rRNA binding proteins, it binds directly to 16S rRNA central domain where it helps coordinate assembly of the platform of the 30S subunit. In Pleurastrum terricola (Filamentous green alga), this protein is Small ribosomal subunit protein uS8c (rps8).